Reading from the N-terminus, the 371-residue chain is Cytochrome b (371 aa).

The next 4 membrane-spanning stretches (helical) occupy residues 25-45 (FGSMLLTCLALQVLTGFFLAV), 69-90 (WMMQNLHAIGASMFFICIYIHI), 105-125 (WMSGITLLITLMATAFFGYVL), and 170-190 (FFALHFILPFAIISLSSLHVI). Residues His75 and His89 each coordinate heme b. Residues His174 and His188 each contribute to the heme b site. His193 serves as a coordination point for a ubiquinone. 4 helical membrane passes run 218-238 (HKDLLLLTLMMMFLFIIVSFF), 280-300 (LGGALALVMSIMILFCTPFTH), 312-332 (LSQLMFWTLVSTFITITWAAT), and 339-358 (FITISQVTSILYFTFFLSIP).

This sequence belongs to the cytochrome b family. As to quaternary structure, the cytochrome bc1 complex contains 3 respiratory subunits (MT-CYB, CYC1 and UQCRFS1), 2 core proteins (UQCRC1 and UQCRC2) and probably 6 low-molecular weight proteins. Requires heme b as cofactor.

It localises to the mitochondrion inner membrane. In terms of biological role, component of the ubiquinol-cytochrome c reductase complex (complex III or cytochrome b-c1 complex) that is part of the mitochondrial respiratory chain. The b-c1 complex mediates electron transfer from ubiquinol to cytochrome c. Contributes to the generation of a proton gradient across the mitochondrial membrane that is then used for ATP synthesis. This is Cytochrome b (MT-CYB) from Liasis mackloti savuensis (Savu python).